Reading from the N-terminus, the 80-residue chain is Putative membrane protein insertion efficiency factor (80 aa).

It belongs to the UPF0161 family.

The protein localises to the cell membrane. Could be involved in insertion of integral membrane proteins into the membrane. The polypeptide is Putative membrane protein insertion efficiency factor (Limosilactobacillus fermentum (strain NBRC 3956 / LMG 18251) (Lactobacillus fermentum)).